The chain runs to 211 residues: tRNA (guanine-N(7)-)-methyltransferase (211 aa).

Glu44, Asp69, Asp96, and Asp118 together coordinate S-adenosyl-L-methionine. Residue Asp118 is part of the active site. Lys122 serves as a coordination point for substrate. The segment at 124 to 129 (KHEKRR) is interaction with RNA. Residues Asp154 and 191–194 (TEYE) contribute to the substrate site.

Belongs to the class I-like SAM-binding methyltransferase superfamily. TrmB family.

The catalysed reaction is guanosine(46) in tRNA + S-adenosyl-L-methionine = N(7)-methylguanosine(46) in tRNA + S-adenosyl-L-homocysteine. It participates in tRNA modification; N(7)-methylguanine-tRNA biosynthesis. Catalyzes the formation of N(7)-methylguanine at position 46 (m7G46) in tRNA. In Streptococcus uberis (strain ATCC BAA-854 / 0140J), this protein is tRNA (guanine-N(7)-)-methyltransferase.